A 274-amino-acid polypeptide reads, in one-letter code: MPLLKAKPTSAGRRHVVQVVNPDLHKGAPYAPLLEKNSKSGGRNNNGRITTRHIGGGHKQHYRVIDFKRNKDGIPAKVERLEYDPNRSANIALVLYADGERRYILAPKGMKAGDAIQSGSGAPIKSGNTLPMRNIPVGTVVHAIEMKPGKGAQIARSAGAYAQILARDGNYVTLRLRSGEMRKVLSDCRATIGEVGNAEHMLRSLGKAGATRWRGIRPTVRGVAMNPVDHPHGGGEGRTSGGRHPVTPWGVPTKGKKTRSNKRTDKLIVRRRNK.

Disordered regions lie at residues 28 to 54 and 223 to 265; these read APYAPLLEKNSKSGGRNNNGRITTRHI and VAMN…KRTD. Low complexity predominate over residues 39–48; the sequence is KSGGRNNNGR.

It belongs to the universal ribosomal protein uL2 family. In terms of assembly, part of the 50S ribosomal subunit. Forms a bridge to the 30S subunit in the 70S ribosome.

Functionally, one of the primary rRNA binding proteins. Required for association of the 30S and 50S subunits to form the 70S ribosome, for tRNA binding and peptide bond formation. It has been suggested to have peptidyltransferase activity; this is somewhat controversial. Makes several contacts with the 16S rRNA in the 70S ribosome. This chain is Large ribosomal subunit protein uL2, found in Alteromonas mediterranea (strain DSM 17117 / CIP 110805 / LMG 28347 / Deep ecotype).